The sequence spans 144 residues: Large ribosomal subunit protein uL15 (144 aa).

A disordered region spans residues Met-1–Gly-49. Positions Arg-21–Ala-31 are enriched in gly residues.

It belongs to the universal ribosomal protein uL15 family. In terms of assembly, part of the 50S ribosomal subunit.

Binds to the 23S rRNA. The sequence is that of Large ribosomal subunit protein uL15 from Shewanella loihica (strain ATCC BAA-1088 / PV-4).